The following is a 179-amino-acid chain: Large ribosomal subunit protein uL5 (179 aa).

This sequence belongs to the universal ribosomal protein uL5 family. As to quaternary structure, part of the 50S ribosomal subunit; part of the 5S rRNA/L5/L18/L25 subcomplex. Contacts the 5S rRNA and the P site tRNA. Forms a bridge to the 30S subunit in the 70S ribosome.

This is one of the proteins that bind and probably mediate the attachment of the 5S RNA into the large ribosomal subunit, where it forms part of the central protuberance. In the 70S ribosome it contacts protein S13 of the 30S subunit (bridge B1b), connecting the 2 subunits; this bridge is implicated in subunit movement. Contacts the P site tRNA; the 5S rRNA and some of its associated proteins might help stabilize positioning of ribosome-bound tRNAs. In Glaesserella parasuis serovar 5 (strain SH0165) (Haemophilus parasuis), this protein is Large ribosomal subunit protein uL5.